A 777-amino-acid chain; its full sequence is Santalene and bergamotene synthase, chloroplastic (777 aa).

A chloroplast-targeting transit peptide spans 1 to 36; the sequence is MIVGYRSTIITLSHPKLGNGKTISSNAIFQRSCRVR. Asp-530 and Asp-534 together coordinate Mg(2+). The short motif at 530–534 is the DDXXD motif element; sequence DDQFD.

It belongs to the terpene synthase family. Tpse subfamily. The cofactor is Mg(2+). Mn(2+) serves as cofactor.

The protein resides in the plastid. It is found in the chloroplast. The enzyme catalyses (2Z,6Z)-farnesyl diphosphate = (+)-alpha-santalene + diphosphate. It catalyses the reaction (2Z,6Z)-farnesyl diphosphate = (+)-endo-beta-bergamotene + diphosphate. It carries out the reaction (2Z,6Z)-farnesyl diphosphate = (1S,5S,6S)-alpha-bergamotene + diphosphate. (2Z,6Z)-farnesyl diphosphate cyclizing enzyme. Produces (+)-alpha-santalene, (+)-endo-beta-bergamotene, (-)-endo-alpha-bergamotene, and at lower amounts, (-)exo-alpha-bergamotene and (+)-epi-beta-santalene. Not able to use geranyl diphosphate, E,E-farnesyl diphosphate or E,E,E-geranylgeranyl diphosphate as substrates, but able to use Neryl diphosphate to make the monoterpene terpineol. This Solanum habrochaites (Wild tomato) protein is Santalene and bergamotene synthase, chloroplastic (SBS).